Here is a 1174-residue protein sequence, read N- to C-terminus: Male determiner protein Mdmd(II) (1174 aa).

Residues 1 to 15 show a composition bias toward basic and acidic residues; the sequence is MNATDAESRKPENKP. 3 disordered regions span residues 1-51, 80-109, and 136-259; these read MNAT…SGQR, KDGS…HPVE, and KQLS…LRRS. A compositionally biased stretch (low complexity) spans 16–35; it reads SSESSSSGSTSGSSDGEVSS. Residues 36 to 47 are compositionally biased toward polar residues; the sequence is KTYFKNNKSKVL. Basic and acidic residues predominate over residues 80–92; that stretch reads KDGSNEMLPKEDS. The span at 93–102 shows a compositional bias: polar residues; it reads INTNHNYTTD. Residues 138–153 are compositionally biased toward low complexity; that stretch reads LSAYRSRSRSTRLSYS. Over residues 183-200 the composition is skewed to basic and acidic residues; that stretch reads HGRDSSTTKRSVSRDKDN. Positions 201–223 are enriched in basic residues; it reads RLRRRIGSSRSHTRSHSRFRRSE. Basic and acidic residues predominate over residues 235-259; that stretch reads RSQERRHERRRSMSSDYERIALRRS. Residues 348–531 enclose the MIF4G domain; the sequence is KKYIHGYINK…KVLFQVRRDG (184 aa). Positions 597-608 are enriched in low complexity; it reads DSDGSFGSGSNS. The segment at 597-616 is disordered; sequence DSDGSFGSGSNSETALSDCD. Residues 641-757 enclose the MI domain; it reads ALRRTIYLTL…SWDVLDCIKL (117 aa). The segment covering 840–857 has biased composition (low complexity); that stretch reads SAPSSSSSSSLSSELSAP. Disordered regions lie at residues 840–1045 and 1095–1133; these read SAPS…SRTK and RKDN…NHSR. Residues 869 to 909 show a composition bias toward basic residues; the sequence is KKKHKGKNKKMTKKKNPSKKKEKTKKIVGKNKIAAKNKTIK. Residues 910–924 are compositionally biased toward basic and acidic residues; the sequence is RRTDKDNSSSKDNFL. A compositionally biased stretch (low complexity) spans 926-957; that stretch reads SESSSNESISLDSLSSELFAPSSYSSSESSND. Residues 963 to 1001 are compositionally biased toward basic residues; sequence KHKGKNKKMTKKKNPSNKREKTKKKLSKNKKAPNKNTKK. The segment covering 1010-1020 has biased composition (low complexity); that stretch reads SSESSISESKS. The span at 1034-1045 shows a compositional bias: basic residues; sequence RKKRVTSKSRTK. Positions 1095–1118 are enriched in basic and acidic residues; the sequence is RKDNYGNRQNHEISQRHDSEIKRR. The segment covering 1119–1130 has biased composition (basic residues); the sequence is REERKKRHHEKN.

The protein belongs to the CWC22 family. Component of the spliceosome C complex.

The protein resides in the nucleus speckle. Male determiner protein (M-factor) that controls male somatic sexual differentiation. Acts as a dominant factor that regulates the mRNA splicing of transformer (tra) and doublesex (dsx) transcripts and promotes expression of male splice forms of tra and dsx. Probably acts as a component of the spliceosome C complex required for mRNA splicing factor and exon-junction complex (EJC) assembly. Hinders eIF4AIII from non-specifically binding RNA and escorts it to the splicing machinery to promote EJC assembly on mature mRNAs. This Musca domestica (House fly) protein is Male determiner protein Mdmd(II).